The sequence spans 251 residues: uncharacterized protein (251 aa).

Disordered stretches follow at residues 1–93 (MQPG…ASPG), 107–152 (GLRS…SRPQ), 169–188 (PSSI…VSLS), and 224–251 (LQAQ…STPS). Residues 225-234 (QAQNLPSSGP) show a composition bias toward polar residues.

This is an uncharacterized protein from Homo sapiens (Human).